The chain runs to 246 residues: Ubiquinone biosynthesis O-methyltransferase (246 aa).

S-adenosyl-L-methionine is bound by residues R36, G60, D81, and L123.

This sequence belongs to the methyltransferase superfamily. UbiG/COQ3 family.

It catalyses the reaction a 3-demethylubiquinol + S-adenosyl-L-methionine = a ubiquinol + S-adenosyl-L-homocysteine + H(+). The catalysed reaction is a 3-(all-trans-polyprenyl)benzene-1,2-diol + S-adenosyl-L-methionine = a 2-methoxy-6-(all-trans-polyprenyl)phenol + S-adenosyl-L-homocysteine + H(+). The protein operates within cofactor biosynthesis; ubiquinone biosynthesis. Its function is as follows. O-methyltransferase that catalyzes the 2 O-methylation steps in the ubiquinone biosynthetic pathway. In Rickettsia typhi (strain ATCC VR-144 / Wilmington), this protein is Ubiquinone biosynthesis O-methyltransferase.